Consider the following 249-residue polypeptide: Homeobox protein TGIF2LX (249 aa).

Disordered stretches follow at residues 1–65 (MEAA…GYSP) and 126–199 (DPIV…PKKK). Basic and acidic residues predominate over residues 9 to 27 (AETRSRVEKDSRRAIKDSP). A compositionally biased stretch (polar residues) spans 28-46 (AKTQSPAQDTSIMLRNNAD). Residues 55–118 (EHKKKRKGYS…INARRRILPD (64 aa)) constitute a DNA-binding region (homeobox; TALE-type). Residues 159-172 (DNVQSLPLRSSPKG) are compositionally biased toward polar residues.

Belongs to the TALE/TGIF homeobox family.

Its subcellular location is the nucleus. May have a transcription role in testis. The protein is Homeobox protein TGIF2LX (TGIF2LX) of Macaca mulatta (Rhesus macaque).